We begin with the raw amino-acid sequence, 120 residues long: uncharacterized protein (120 aa).

This sequence belongs to the asp23 family.

This is an uncharacterized protein from Bacillus subtilis (strain 168).